The sequence spans 237 residues: uncharacterized protein (237 aa).

Positions 1–27 (MKSFLRKPKFWLLLLGGLSTSSIILSA) are cleaved as a signal peptide. Cys28 carries the N-palmitoyl cysteine lipid modification. The S-diacylglycerol cysteine moiety is linked to residue Cys28.

This sequence belongs to the MG307/MG309/MG338 family.

The protein localises to the membrane. This is an uncharacterized protein from Mycoplasma pneumoniae (strain ATCC 29342 / M129 / Subtype 1) (Mycoplasmoides pneumoniae).